The chain runs to 338 residues: Ketol-acid reductoisomerase (NADP(+)) (338 aa).

The region spanning 2–182 is the KARI N-terminal Rossmann domain; that stretch reads TKMYYEKDTD…GGARAGVLET (181 aa). NADP(+) is bound by residues 25–28, S51, S53, and 83–86; these read YGSQ and DELQ. H108 is an active-site residue. G134 lines the NADP(+) pocket. A KARI C-terminal knotted domain is found at 183-330; the sequence is TFRTETETDL…SEIRKLYCWN (148 aa). Residues D191, E195, E227, and E231 each contribute to the Mg(2+) site. S252 contacts substrate.

Belongs to the ketol-acid reductoisomerase family. Requires Mg(2+) as cofactor.

The catalysed reaction is (2R)-2,3-dihydroxy-3-methylbutanoate + NADP(+) = (2S)-2-acetolactate + NADPH + H(+). It carries out the reaction (2R,3R)-2,3-dihydroxy-3-methylpentanoate + NADP(+) = (S)-2-ethyl-2-hydroxy-3-oxobutanoate + NADPH + H(+). It functions in the pathway amino-acid biosynthesis; L-isoleucine biosynthesis; L-isoleucine from 2-oxobutanoate: step 2/4. The protein operates within amino-acid biosynthesis; L-valine biosynthesis; L-valine from pyruvate: step 2/4. In terms of biological role, involved in the biosynthesis of branched-chain amino acids (BCAA). Catalyzes an alkyl-migration followed by a ketol-acid reduction of (S)-2-acetolactate (S2AL) to yield (R)-2,3-dihydroxy-isovalerate. In the isomerase reaction, S2AL is rearranged via a Mg-dependent methyl migration to produce 3-hydroxy-3-methyl-2-ketobutyrate (HMKB). In the reductase reaction, this 2-ketoacid undergoes a metal-dependent reduction by NADPH to yield (R)-2,3-dihydroxy-isovalerate. This chain is Ketol-acid reductoisomerase (NADP(+)), found in Clostridium botulinum (strain Alaska E43 / Type E3).